The following is a 291-amino-acid chain: UDP-N-acetylenolpyruvoylglucosamine reductase (291 aa).

In terms of domain architecture, FAD-binding PCMH-type spans 22 to 187 (RIGGPARYFK…ASATFQLTKD (166 aa)). Residue Arg-166 is part of the active site. Cys-214 serves as the catalytic Proton donor. Glu-283 is an active-site residue.

Belongs to the MurB family. Requires FAD as cofactor.

Its subcellular location is the cytoplasm. The enzyme catalyses UDP-N-acetyl-alpha-D-muramate + NADP(+) = UDP-N-acetyl-3-O-(1-carboxyvinyl)-alpha-D-glucosamine + NADPH + H(+). It functions in the pathway cell wall biogenesis; peptidoglycan biosynthesis. Functionally, cell wall formation. The sequence is that of UDP-N-acetylenolpyruvoylglucosamine reductase from Chlamydia trachomatis serovar A (strain ATCC VR-571B / DSM 19440 / HAR-13).